We begin with the raw amino-acid sequence, 65 residues long: uncharacterized protein (65 aa).

The N-terminal stretch at 1–22 is a signal peptide; that stretch reads MKFIKLFTFLVYLFVTLTNVFA.

This is an uncharacterized protein from Invertebrate iridescent virus 6 (IIV-6).